Consider the following 207-residue polypeptide: High frequency lysogenization protein HflD homolog (207 aa).

The protein belongs to the HflD family.

It localises to the cytoplasm. Its subcellular location is the cell inner membrane. In Tolumonas auensis (strain DSM 9187 / NBRC 110442 / TA 4), this protein is High frequency lysogenization protein HflD homolog.